Reading from the N-terminus, the 288-residue chain is Dysbindin protein homolog (288 aa).

Residues 147–239 are a coiled coil; sequence AQLQNSSQVL…QRERQAVFDD (93 aa).

Belongs to the dysbindin family. In terms of assembly, component of the biogenesis of lysosome-related organelles complex-1 (BLOC-1) composed of Blos1, Blos2, Blos3, Blos4, Dysb, Muted, Pldn and Snapin. Interacts with Pldn and Snapin.

Its function is as follows. Component of the biogenesis of lysosome-related organelles complex-1 (BLOC-1) involved in pigment granule biogenesis and membrane trafficking in synapses. In response to high synaptic activity at neuromuscular junctions, stabilizes Pldn protein levels and, together with Pldn, plays a role in promoting efficient synaptic vesicle recycling and re-formation through early endosomes. This is Dysbindin protein homolog from Drosophila melanogaster (Fruit fly).